The sequence spans 941 residues: Protocadherin alpha-12 (941 aa).

The N-terminal stretch at 1 to 29 (MVIIGPRGPGSQRLLLSLLLLAAWEVGSG) is a signal peptide. Cadherin domains are found at residues 30 to 133 (QLHY…PPVF), 134 to 242 (RERE…GPAF), 243 to 350 (DKPS…VPEV), 351 to 455 (MVTS…APAF), 456 to 565 (AQPE…APAL), and 581 to 678 (VPRS…APKT). The Extracellular segment spans residues 30-697 (QLHYSVYEEA…DPEAALVDIN (668 aa)). N257 and N265 each carry an N-linked (GlcNAc...) asparagine glycan. Residue N548 is glycosylated (N-linked (GlcNAc...) asparagine). The chain crosses the membrane as a helical span at residues 698-718 (VYLIIAICAVSSLLVLTLLLY). Residues 719–941 (TALRCSAPPT…GNSTTDNSDQ (223 aa)) lie on the Cytoplasmic side of the membrane. 5 PXXP repeats span residues 734 to 737 (PGKP), 790 to 793 (PRQP), 823 to 826 (PGGP), 863 to 866 (GPGN), and 882 to 885 (PGSP). Residues 734–885 (PGKPTLVCSS…PDKFIIPGSP (152 aa)) are 5 X 4 AA repeats of P-X-X-P. The disordered stretch occupies residues 818–941 (ILRAGPGGPD…GNSTTDNSDQ (124 aa)). Positions 900–914 (DKSDFITFGKKEETK) are enriched in basic and acidic residues.

It localises to the cell membrane. Functionally, potential calcium-dependent cell-adhesion protein. May be involved in the establishment and maintenance of specific neuronal connections in the brain. This Homo sapiens (Human) protein is Protocadherin alpha-12 (PCDHA12).